The sequence spans 350 residues: Small ribosomal subunit protein uS3 (350 aa).

Positions 38 to 106 (IRKMMSRGME…QVQLNILEVK (69 aa)) constitute a KH type-2 domain. The segment at 211 to 350 (AEREAQEALQ…TPGTPEKAEE (140 aa)) is disordered. Over residues 222-232 (QTRRDRPRRGP) the composition is skewed to basic residues. Low complexity predominate over residues 261–350 (NAPAAETAAS…TPGTPEKAEE (90 aa)).

Belongs to the universal ribosomal protein uS3 family. In terms of assembly, part of the 30S ribosomal subunit. Forms a tight complex with proteins S10 and S14.

Binds the lower part of the 30S subunit head. Binds mRNA in the 70S ribosome, positioning it for translation. The polypeptide is Small ribosomal subunit protein uS3 (Frankia alni (strain DSM 45986 / CECT 9034 / ACN14a)).